Reading from the N-terminus, the 346-residue chain is Upstream stimulatory factor 2 (346 aa).

Disordered stretches follow at residues 1 to 44 (MDML…PGAE) and 215 to 244 (APRT…NEVE). Positions 11 to 20 (AASATAAAAA) are enriched in low complexity. Positions 226-244 (DGTRTPRDERRRAQHNEVE) are enriched in basic and acidic residues. The bHLH domain occupies 235–290 (RRRAQHNEVERRRRDKINNWIVQLSKIIPDCNADNSKTGASKGGILSKACDYIREL). The leucine-zipper stretch occupies residues 307-328 (LQMDNELLRQQIEELKNENALL).

In terms of assembly, interacts with MAF. Efficient DNA binding requires dimerization with another bHLH protein. Binds DNA as a homodimer or a heterodimer (USF1/USF2). In vivo, the USF1/USF2A heterodimer represents over 66% of the usf binding activity whereas the USF1 and USF2A homodimers represent less than 10%. The USF1/USF2B heterodimer accounted for almost 15% in some cell. As to expression, ubiquitous.

It localises to the nucleus. Its function is as follows. Transcription factor that binds to a symmetrical DNA sequence (E-boxes) (5'-CACGTG-3') that is found in a variety of viral and cellular promoters. The chain is Upstream stimulatory factor 2 (USF2) from Homo sapiens (Human).